The following is a 184-amino-acid chain: Probable RNA 2'-phosphotransferase (184 aa).

It belongs to the KptA/TPT1 family.

Its function is as follows. Removes the 2'-phosphate from RNA via an intermediate in which the phosphate is ADP-ribosylated by NAD followed by a presumed transesterification to release the RNA and generate ADP-ribose 1''-2''-cyclic phosphate (APPR&gt;P). May function as an ADP-ribosylase. In Escherichia coli (strain K12 / MC4100 / BW2952), this protein is Probable RNA 2'-phosphotransferase.